We begin with the raw amino-acid sequence, 1311 residues long: Cyclin-G-associated kinase (1311 aa).

The residue at position 2 (serine 2) is an N-acetylserine. Phosphoserine occurs at positions 2 and 16. The Protein kinase domain maps to 40–314; it reads LRVRRVLAEG…SIAEVVHQLQ (275 aa). Aspartate 173 (proton acceptor) is an active-site residue. In terms of domain architecture, Phosphatase tensin-type spans 399 to 566; that stretch reads SVANYAKGDL…EYMCDMVAEE (168 aa). Phosphoserine is present on serine 456. The 139-residue stretch at 572-710 folds into the C2 tensin-type domain; the sequence is SKPILVRAVV…FQVNLEVEVE (139 aa). 2 disordered regions span residues 709-729 and 749-788; these read VEPR…SMRG and FGKP…SADA. A Phosphoserine modification is found at serine 770. A compositionally biased stretch (low complexity) spans 770-788; that stretch reads SPEAEPTDSDSPPSSSADA. Residue threonine 776 is modified to Phosphothreonine. Serine 783 carries the post-translational modification Phosphoserine. Threonine 794 is modified (phosphothreonine). 3 disordered regions span residues 801-860, 913-1035, and 1047-1150; these read KEAE…VQQD, CLLG…DLLG, and AVAP…PNYA. Phosphoserine occurs at positions 811, 826, 829, 834, and 939. Composition is skewed to low complexity over residues 925–939 and 950–966; these read PPED…LLAS and PRGG…PLLP. Polar residues-rich tracts occupy residues 967–976 and 1070–1080; these read SSGNNSQPCS and SQASWTKSQNP. The residue at position 1096 (serine 1096) is a Phosphoserine. Positions 1109–1124 are enriched in polar residues; the sequence is TATTPKGSSSWQTSRP. At arginine 1123 the chain carries Omega-N-methylarginine. Serine 1176 and serine 1185 each carry phosphoserine. The J domain occupies 1247–1311; that stretch reads SRWTPVGMAD…FENQGSRPLF (65 aa).

It belongs to the protein kinase superfamily. Ser/Thr protein kinase family. In terms of tissue distribution, ubiquitous. Highest in testis.

It localises to the cytoplasm. It is found in the perinuclear region. Its subcellular location is the golgi apparatus. The protein resides in the trans-Golgi network. The protein localises to the cell junction. It localises to the focal adhesion. It is found in the cytoplasmic vesicle. Its subcellular location is the clathrin-coated vesicle. It carries out the reaction L-seryl-[protein] + ATP = O-phospho-L-seryl-[protein] + ADP + H(+). The catalysed reaction is L-threonyl-[protein] + ATP = O-phospho-L-threonyl-[protein] + ADP + H(+). Its function is as follows. Associates with cyclin G and CDK5. Seems to act as an auxilin homolog that is involved in the uncoating of clathrin-coated vesicles by Hsc70 in non-neuronal cells. Expression oscillates slightly during the cell cycle, peaking at G1. May play a role in clathrin-mediated endocytosis and intracellular trafficking, and in the dynamics of clathrin assembly/disassembly. The chain is Cyclin-G-associated kinase from Homo sapiens (Human).